A 259-amino-acid chain; its full sequence is Putative deoxyribonuclease TATDN1 homolog (259 aa).

A divalent metal cation contacts are provided by Glu-82, His-116, His-138, and Asp-186.

It belongs to the metallo-dependent hydrolases superfamily. TatD-type hydrolase family. A divalent metal cation is required as a cofactor.

Its subcellular location is the nucleus. Putative deoxyribonuclease. The chain is Putative deoxyribonuclease TATDN1 homolog from Vairimorpha ceranae (strain BRL01) (Microsporidian parasite).